An 84-amino-acid polypeptide reads, in one-letter code: Small ribosomal subunit protein uS17 (84 aa).

This sequence belongs to the universal ribosomal protein uS17 family. As to quaternary structure, part of the 30S ribosomal subunit.

Functionally, one of the primary rRNA binding proteins, it binds specifically to the 5'-end of 16S ribosomal RNA. The protein is Small ribosomal subunit protein uS17 of Glaesserella parasuis serovar 5 (strain SH0165) (Haemophilus parasuis).